The primary structure comprises 1544 residues: Protein mahjong (1544 aa).

The segment at 1-110 (MSEGSGSENA…AAADRRQATK (110 aa)) is disordered. The span at 10–35 (AAAAEAAAEAEAATEAALMAEAVAVA) shows a compositional bias: low complexity. Acidic residues predominate over residues 38 to 91 (SDEEEQPEAEDMPEQAGDNQEEDAAEQQDGGEPEADEDADADDAMSVENAENES). Residues Ser-565 and Ser-569 each carry the phosphoserine modification. Positions 912-944 (NKQQLYQLIFEHLESNGLSQTAQMLQREVGLPL) constitute a LisH domain. Disordered stretches follow at residues 946-973 (TPTTRSFHQSPFDYKSLPSGSSSLSRNR) and 987-1059 (GNGD…LAED). Ser-955 carries the post-translational modification Phosphoserine. Low complexity predominate over residues 961-971 (SLPSGSSSLSR). Residues 1016-1027 (PNFSSLNTTQTP) show a composition bias toward polar residues. 2 short sequence motifs (DWD box) span residues 1302 to 1309 (VLWDVRSG) and 1338 to 1345 (EVWDLRTF). Disordered regions lie at residues 1447–1475 (KSERSEEEDDEEVPESDEDGSDTGSENTF) and 1487–1544 (LRNL…SSDD). Acidic residues-rich tracts occupy residues 1451 to 1467 (SEEEDDEEVPESDEDGS) and 1495 to 1535 (NDDE…DVLE).

The protein belongs to the VPRBP/DCAF1 family. In terms of assembly, component of the CUL4-RBX1-DDB1-DCAF1 E3 ubiquitin-protein ligase complex. Interacts with l(2)gl.

It is found in the nucleus. It participates in protein modification; protein ubiquitination. Its function is as follows. Probable substrate recognition component of tsome E3 ubiquitin-protein ligase complex. Plays a key role in cell competition via its interaction with l(2)gl. This Drosophila melanogaster (Fruit fly) protein is Protein mahjong (mahj).